A 284-amino-acid polypeptide reads, in one-letter code: Tropomyosin alpha-1 chain (284 aa).

Residues 1–38 (MDAIKKKMQMLKLDKENALDRAEQAEADKKGAEDKSKQ) form a disordered region. The stretch at 1–284 (MDAIKKKMQM…DHALNDMTSI (284 aa)) forms a coiled coil. Positions 12–38 (KLDKENALDRAEQAEADKKGAEDKSKQ) are enriched in basic and acidic residues.

Belongs to the tropomyosin family. Homodimer. Heterodimer of an alpha (TPM1, TPM3 or TPM4) and a beta (TPM2) chain.

The protein localises to the cytoplasm. It localises to the cytoskeleton. Binds to actin filaments in muscle and non-muscle cells. Plays a central role, in association with the troponin complex, in the calcium dependent regulation of vertebrate striated muscle contraction. Smooth muscle contraction is regulated by interaction with caldesmon. In non-muscle cells is implicated in stabilizing cytoskeleton actin filaments. This is Tropomyosin alpha-1 chain (tpm1) from Xenopus laevis (African clawed frog).